A 536-amino-acid polypeptide reads, in one-letter code: Chaperonin GroEL 2 (536 aa).

ATP-binding positions include 29-32 (TLGP), 86-90 (DGTTT), G413, 476-478 (NAA), and D492.

The protein belongs to the chaperonin (HSP60) family. Forms a cylinder of 14 subunits composed of two heptameric rings stacked back-to-back. Interacts with the co-chaperonin GroES.

It localises to the cytoplasm. It catalyses the reaction ATP + H2O + a folded polypeptide = ADP + phosphate + an unfolded polypeptide.. Functionally, together with its co-chaperonin GroES, plays an essential role in assisting protein folding. The GroEL-GroES system forms a nano-cage that allows encapsulation of the non-native substrate proteins and provides a physical environment optimized to promote and accelerate protein folding. In Moorella thermoacetica (strain ATCC 39073 / JCM 9320), this protein is Chaperonin GroEL 2.